The following is a 534-amino-acid chain: Inorganic phosphate transporter 1-6 (534 aa).

The Cytoplasmic portion of the chain corresponds to 1-29 (MGGGGGEQQQLEVLHALDVAKTQWYHFTA). The helical transmembrane segment at 30–50 (IVVAGMGFFTDAYDLFCISLV) threads the bilayer. Over 51 to 75 (TKLLGRIYYRVDGSPSPGTLPPHVS) the chain is Extracellular. A helical membrane pass occupies residues 76-96 (ASVNGVAFVGTLSGQLFFGWL). The Cytoplasmic portion of the chain corresponds to 97-104 (GDKLGRKR). The helical transmembrane segment at 105 to 125 (VYGITLMLMVLCSLASALSFG) threads the bilayer. Residues 126–127 (HT) are Extracellular-facing. Residues 128-148 (PTSVMATLCFFRFWLGFGIGG) form a helical membrane-spanning segment. Over 149–168 (DYPLSATIMSEYANKKTRGA) the chain is Cytoplasmic. Residues 169–189 (FIAAVFAMQGFGIITGGLVAI) traverse the membrane as a helical segment. The Extracellular portion of the chain corresponds to 190–216 (LVSASFRAAFPAPPYGEDPVASTPPQA). Residues 217-237 (DFVWRIILMLGALPAALTYYW) traverse the membrane as a helical segment. Residues 238-294 (RTKMPETARYTALVANNAKQAAADMSKVLQVVEMRNIGNNGGSRRPFGLFSGEFVRR) lie on the Cytoplasmic side of the membrane. The chain crosses the membrane as a helical span at residues 295–315 (HGLHLVGTSATWLLLDIAFYS). Topologically, residues 316–350 (QNLFQKDIFSAVGWIPKAATMSALEELFRIARAQT) are extracellular. The chain crosses the membrane as a helical span at residues 351–371 (LIALCGTVPGYWFTVALIDVV). At 372 to 375 (GRFK) the chain is on the cytoplasmic side. The chain crosses the membrane as a helical span at residues 376–396 (IQAVGFFMMTLFMLTLALPYH). Topologically, residues 397–405 (HWTAPGKNH) are extracellular. A helical membrane pass occupies residues 406–426 (VGFLLLYGLTFFFANFGPNST). Topologically, residues 427-445 (TFIVPAEIFPARLRATCHG) are cytoplasmic. A helical transmembrane segment spans residues 446–466 (ISAASGKLGAIVGSFGFLYLA). Topologically, residues 467 to 486 (QSPDRSKTEHGYPPGIGVRN) are extracellular. The chain crosses the membrane as a helical span at residues 487-507 (SLFLLAACNLLGLLFTFLVPE). The Cytoplasmic portion of the chain corresponds to 508–534 (SKGKSLEEMSGDAEAQEEAPPPLQTVL). Residues 514–534 (EEMSGDAEAQEEAPPPLQTVL) are disordered.

It belongs to the major facilitator superfamily. Phosphate:H(+) symporter (TC 2.A.1.9) family. Highly expressed in leaves and at low levels in roots. Expressed in leaf xylem parenchyma cells.

The protein resides in the membrane. Functionally, high-affinity transporter for external inorganic phosphate (Pi). Probably involved in Pi uptake, translocation and internal transport throughout the plant. The chain is Inorganic phosphate transporter 1-6 (PHT1-6) from Oryza sativa subsp. japonica (Rice).